The primary structure comprises 368 residues: tRNA-specific 2-thiouridylase MnmA (368 aa).

ATP is bound by residues 12–19 (AMSGGVDS) and Met-38. The active-site Nucleophile is Cys-110. Cys-110 and Cys-207 are joined by a disulfide. Gly-134 contacts ATP. The tract at residues 157–159 (KDQ) is interaction with tRNA. Cys-207 functions as the Cysteine persulfide intermediate in the catalytic mechanism. Residues 312–313 (RY) are interaction with tRNA.

This sequence belongs to the MnmA/TRMU family.

Its subcellular location is the cytoplasm. It catalyses the reaction S-sulfanyl-L-cysteinyl-[protein] + uridine(34) in tRNA + AH2 + ATP = 2-thiouridine(34) in tRNA + L-cysteinyl-[protein] + A + AMP + diphosphate + H(+). In terms of biological role, catalyzes the 2-thiolation of uridine at the wobble position (U34) of tRNA, leading to the formation of s(2)U34. The protein is tRNA-specific 2-thiouridylase MnmA of Geobacter metallireducens (strain ATCC 53774 / DSM 7210 / GS-15).